Consider the following 289-residue polypeptide: 4-diphosphocytidyl-2-C-methyl-D-erythritol kinase (289 aa).

Residue Lys11 is part of the active site. 95 to 105 (PMGGGIGGGSS) provides a ligand contact to ATP. Asp137 is a catalytic residue.

The protein belongs to the GHMP kinase family. IspE subfamily.

The catalysed reaction is 4-CDP-2-C-methyl-D-erythritol + ATP = 4-CDP-2-C-methyl-D-erythritol 2-phosphate + ADP + H(+). Its pathway is isoprenoid biosynthesis; isopentenyl diphosphate biosynthesis via DXP pathway; isopentenyl diphosphate from 1-deoxy-D-xylulose 5-phosphate: step 3/6. Functionally, catalyzes the phosphorylation of the position 2 hydroxy group of 4-diphosphocytidyl-2C-methyl-D-erythritol. The chain is 4-diphosphocytidyl-2-C-methyl-D-erythritol kinase from Aeromonas salmonicida (strain A449).